The sequence spans 102 residues: Complement inhibitor RaCI3 (102 aa).

An N-terminal signal peptide occupies residues 1–24; it reads MAALNGLVLLLLTISAMFISECYS. 3 disulfides stabilise this stretch: cysteine 37/cysteine 61, cysteine 42/cysteine 63, and cysteine 57/cysteine 78.

Belongs to the RaCI family. In terms of tissue distribution, expressed in salivary glands.

It localises to the secreted. Functionally, complement inhibitor. Prevents complement-mediated C5 activation by binding to C5. Binds C5 at a different binding site than the other tick complement inhibitors OmCI and CirpT1, and the drug eculizumab. Inhibits complement in human and guinea pig but not in other species tested (rabbit, rat, mouse, and pig). The polypeptide is Complement inhibitor RaCI3 (Dermacentor andersoni (Rocky mountain wood tick)).